The primary structure comprises 245 residues: Uridylate kinase (245 aa).

15–18 (KLSG) is an ATP binding site. The segment at 23 to 28 (GEEGFG) is involved in allosteric activation by GTP. UMP is bound at residue Gly57. Positions 58 and 62 each coordinate ATP. Residues Asp77 and 138–145 (TGNPFCTT) each bind UMP. Positions 165, 171, and 174 each coordinate ATP.

It belongs to the UMP kinase family. Homohexamer.

It localises to the cytoplasm. The enzyme catalyses UMP + ATP = UDP + ADP. It participates in pyrimidine metabolism; CTP biosynthesis via de novo pathway; UDP from UMP (UMPK route): step 1/1. With respect to regulation, allosterically activated by GTP. Inhibited by UTP. Functionally, catalyzes the reversible phosphorylation of UMP to UDP. The polypeptide is Uridylate kinase (Shewanella putrefaciens (strain CN-32 / ATCC BAA-453)).